A 239-amino-acid polypeptide reads, in one-letter code: Pyrroloquinoline-quinone synthase (239 aa).

The protein belongs to the PqqC family.

The enzyme catalyses 6-(2-amino-2-carboxyethyl)-7,8-dioxo-1,2,3,4,7,8-hexahydroquinoline-2,4-dicarboxylate + 3 O2 = pyrroloquinoline quinone + 2 H2O2 + 2 H2O + H(+). The protein operates within cofactor biosynthesis; pyrroloquinoline quinone biosynthesis. Functionally, ring cyclization and eight-electron oxidation of 3a-(2-amino-2-carboxyethyl)-4,5-dioxo-4,5,6,7,8,9-hexahydroquinoline-7,9-dicarboxylic-acid to PQQ. In Gluconobacter oxydans (strain 621H) (Gluconobacter suboxydans), this protein is Pyrroloquinoline-quinone synthase.